Consider the following 123-residue polypeptide: MVRATGSVASRARRKRILKQAKGFWGDRKGHFRQSRSSVMRAMAFNYMHRKDRKGDFRSLWISRLNVASRIHGLSYSRLINGLKQAGINLNRKMLSEMAIHDPQGFALVAAQAKLALEASIQG.

Belongs to the bacterial ribosomal protein bL20 family.

Its function is as follows. Binds directly to 23S ribosomal RNA and is necessary for the in vitro assembly process of the 50S ribosomal subunit. It is not involved in the protein synthesizing functions of that subunit. This chain is Large ribosomal subunit protein bL20 (rplT), found in Chlamydia muridarum (strain MoPn / Nigg).